The primary structure comprises 201 residues: Glycerol-3-phosphate acyltransferase (201 aa).

The next 5 membrane-spanning stretches (helical) occupy residues 4–24, 55–75, 80–100, 110–130, and 152–174; these read LVAATLGGYLLGSVPFGLVLT, LATLLLDGGKGAIAVGLVWVL, MVPVAGFAAVLGHNFPVWLGF, IGTLLAAAWPVGLACIGTWLV, and FALYFAGPQYALMAAGLAVMGFY.

It belongs to the PlsY family. Probably interacts with PlsX.

It localises to the cell inner membrane. The catalysed reaction is an acyl phosphate + sn-glycerol 3-phosphate = a 1-acyl-sn-glycero-3-phosphate + phosphate. It participates in lipid metabolism; phospholipid metabolism. Catalyzes the transfer of an acyl group from acyl-phosphate (acyl-PO(4)) to glycerol-3-phosphate (G3P) to form lysophosphatidic acid (LPA). This enzyme utilizes acyl-phosphate as fatty acyl donor, but not acyl-CoA or acyl-ACP. In Paramagnetospirillum magneticum (strain ATCC 700264 / AMB-1) (Magnetospirillum magneticum), this protein is Glycerol-3-phosphate acyltransferase.